The following is a 431-amino-acid chain: Adenylosuccinate synthetase (431 aa).

Residues 13–19 and 41–43 each bind GTP; these read GDEGKGK and GHT. The active-site Proton acceptor is D14. Positions 14 and 41 each coordinate Mg(2+). IMP contacts are provided by residues 14–17, 39–42, T130, R144, Q225, T240, and R304; these read DEGK and NAGH. H42 (proton donor) is an active-site residue. 300 to 306 lines the substrate pocket; that stretch reads ATTHRPR. GTP is bound by residues R306, 332–334, and 414–416; these read KLD and STG.

The protein belongs to the adenylosuccinate synthetase family. As to quaternary structure, homodimer. It depends on Mg(2+) as a cofactor.

Its subcellular location is the cytoplasm. The enzyme catalyses IMP + L-aspartate + GTP = N(6)-(1,2-dicarboxyethyl)-AMP + GDP + phosphate + 2 H(+). The protein operates within purine metabolism; AMP biosynthesis via de novo pathway; AMP from IMP: step 1/2. Functionally, plays an important role in the de novo pathway of purine nucleotide biosynthesis. Catalyzes the first committed step in the biosynthesis of AMP from IMP. In Nitrosococcus oceani (strain ATCC 19707 / BCRC 17464 / JCM 30415 / NCIMB 11848 / C-107), this protein is Adenylosuccinate synthetase.